Here is a 474-residue protein sequence, read N- to C-terminus: Glutamate--tRNA ligase (474 aa).

Positions 9-19 (PSPTGYLHVGG) match the 'HIGH' region motif. Positions 240–244 (KLSKR) match the 'KMSKS' region motif. K243 is an ATP binding site.

Belongs to the class-I aminoacyl-tRNA synthetase family. Glutamate--tRNA ligase type 1 subfamily. Monomer.

It localises to the cytoplasm. It catalyses the reaction tRNA(Glu) + L-glutamate + ATP = L-glutamyl-tRNA(Glu) + AMP + diphosphate. In terms of biological role, catalyzes the attachment of glutamate to tRNA(Glu) in a two-step reaction: glutamate is first activated by ATP to form Glu-AMP and then transferred to the acceptor end of tRNA(Glu). This chain is Glutamate--tRNA ligase, found in Aliivibrio fischeri (strain ATCC 700601 / ES114) (Vibrio fischeri).